We begin with the raw amino-acid sequence, 77 residues long: Large ribosomal subunit protein bL28 (77 aa).

The disordered stretch occupies residues 1–20 (MSRVCQVTGKGPVTGNNISH).

Belongs to the bacterial ribosomal protein bL28 family.

The polypeptide is Large ribosomal subunit protein bL28 (Pseudomonas fluorescens (strain SBW25)).